Reading from the N-terminus, the 197-residue chain is Pyridoxal 5'-phosphate synthase subunit PdxT (197 aa).

52–54 contacts L-glutamine; that stretch reads GES. The Nucleophile role is filled by Cys-84. Residues Arg-111 and 139–140 each bind L-glutamine; that span reads IR. Active-site charge relay system residues include His-175 and Glu-177.

The protein belongs to the glutaminase PdxT/SNO family. In terms of assembly, in the presence of PdxS, forms a dodecamer of heterodimers. Only shows activity in the heterodimer.

The enzyme catalyses aldehydo-D-ribose 5-phosphate + D-glyceraldehyde 3-phosphate + L-glutamine = pyridoxal 5'-phosphate + L-glutamate + phosphate + 3 H2O + H(+). It catalyses the reaction L-glutamine + H2O = L-glutamate + NH4(+). Its pathway is cofactor biosynthesis; pyridoxal 5'-phosphate biosynthesis. In terms of biological role, catalyzes the hydrolysis of glutamine to glutamate and ammonia as part of the biosynthesis of pyridoxal 5'-phosphate. The resulting ammonia molecule is channeled to the active site of PdxS. This chain is Pyridoxal 5'-phosphate synthase subunit PdxT, found in Halorubrum lacusprofundi (strain ATCC 49239 / DSM 5036 / JCM 8891 / ACAM 34).